A 257-amino-acid chain; its full sequence is Chlorocatechol 1,2-dioxygenase (257 aa).

4 residues coordinate Fe cation: tyrosine 134, tyrosine 169, histidine 194, and histidine 196.

It belongs to the intradiol ring-cleavage dioxygenase family. The cofactor is Fe(3+).

The enzyme catalyses 4-chlorocatechol + O2 = 3-chloro-cis,cis-muconate + 2 H(+). The catalysed reaction is 3,5-dichlorocatechol + O2 = (2E,4E)-2,4-dichloromuconate + 2 H(+). The protein is Chlorocatechol 1,2-dioxygenase (clcA) of Rhodococcus opacus (Nocardia opaca).